Here is a 153-residue protein sequence, read N- to C-terminus: MKTFVLHIFIFALVAFASASRDSAKKIGSQYDNYATCLTEHSLTEDDIFSIGEVSSGQHKTNHEETELHKNGCVMQCMLEKDGLMSGADYDEEKMREDYIKETGAQPGDQRIEALNACMHETKDMEDKCDKSLLLVACVLAAEAVLADSNEGA.

A signal peptide spans 1–19 (MKTFVLHIFIFALVAFASA). 3 disulfides stabilise this stretch: Cys-37–Cys-77, Cys-73–Cys-129, and Cys-118–Cys-138.

It belongs to the PBP/GOBP family. In terms of assembly, homodimer.

Its subcellular location is the secreted. Its function is as follows. Colony queen number, a major feature of social organization, is associated with worker genotype for Gp-9. Colonies are headed by either a single reproductive queen (monogyne form) or multiple queens (polygyne form). Differences in worker Gp-9 genotypes between social forms may cause differences in workers' abilities to recognize queens and regulate their numbers. The protein is Pheromone-binding protein Gp-9 of Solenopsis n. sp. (strain JP-2002) (Fire ant).